Reading from the N-terminus, the 61-residue chain is Metallothionein-1B (61 aa).

A beta region spans residues 1–29; sequence MDPNCSCVAGESCTCAGSCKCKQCRCASC. Positions 5, 7, 13, 15, 19, 21, 24, 26, 29, 33, 34, 36, 37, 41, 44, 48, 50, 57, 59, and 60 each coordinate a divalent metal cation. The segment at 30-61 is alpha; sequence KKSCCSCCPVGCAKCAQGCVCKGASDKCSCCA.

This sequence belongs to the metallothionein superfamily. Type 1 family.

Its function is as follows. Metallothioneins have a high content of cysteine residues that bind various heavy metals; these proteins are transcriptionally regulated by both heavy metals and glucocorticoids. This chain is Metallothionein-1B, found in Equus caballus (Horse).